Consider the following 520-residue polypeptide: Developmental regulatory protein wetA (520 aa).

Disordered regions lie at residues 110–149 (ATHA…NERR), 260–294 (HPSS…SWQS), 388–453 (TTSQ…GSNK), and 471–496 (LTGV…RRRK). Residues 261–294 (PSSSTLTNSSPSSADDMFSSSHSSDPHSLSSWQS) are compositionally biased toward low complexity. The span at 388–401 (TTSQVHNVSRSPSL) shows a compositional bias: polar residues. Residues 420-429 (PVHRRTHSRK) show a composition bias toward basic residues. Over residues 436-453 (NAPKPAKASGSSSRGSNK) the composition is skewed to low complexity.

Belongs to the wetA family.

BrlA, abaA and wetA are pivotal regulators of conidiophore development and conidium maturation. They act individually and together to regulate their own expression and that of numerous other sporulation-specific genes. Plays a crucial role in pigmentation and conidial cell wall integrity. The chain is Developmental regulatory protein wetA from Penicillium digitatum (strain PHI26 / CECT 20796) (Green mold).